A 328-amino-acid polypeptide reads, in one-letter code: Flap endonuclease 1 (328 aa).

The tract at residues 1 to 98 (MGVKLRDVVS…ETVSRRADIR (98 aa)) is N-domain. Residues Asp-27, Asp-80, Glu-152, Glu-154, Asp-173, Asp-175, and Asp-226 each contribute to the Mg(2+) site. An I-domain region spans residues 116-247 (RAKKYAVRSS…RGLKLIREKG (132 aa)). The segment at 320-328 (TQKSLEDWF) is interaction with PCNA.

This sequence belongs to the XPG/RAD2 endonuclease family. FEN1 subfamily. Interacts with PCNA. PCNA stimulates the nuclease activity without altering cleavage specificity. It depends on Mg(2+) as a cofactor.

Its function is as follows. Structure-specific nuclease with 5'-flap endonuclease and 5'-3' exonuclease activities involved in DNA replication and repair. During DNA replication, cleaves the 5'-overhanging flap structure that is generated by displacement synthesis when DNA polymerase encounters the 5'-end of a downstream Okazaki fragment. Binds the unpaired 3'-DNA end and kinks the DNA to facilitate 5' cleavage specificity. Cleaves one nucleotide into the double-stranded DNA from the junction in flap DNA, leaving a nick for ligation. Also involved in the base excision repair (BER) pathway. Acts as a genome stabilization factor that prevents flaps from equilibrating into structures that lead to duplications and deletions. Also possesses 5'-3' exonuclease activity on nicked or gapped double-stranded DNA. This Methanothermobacter thermautotrophicus (strain ATCC 29096 / DSM 1053 / JCM 10044 / NBRC 100330 / Delta H) (Methanobacterium thermoautotrophicum) protein is Flap endonuclease 1.